We begin with the raw amino-acid sequence, 486 residues long: 6-phosphogluconate dehydrogenase, decarboxylating 2 (486 aa).

NADP(+) contacts are provided by residues 12-17, 35-37, 79-81, and asparagine 107; these read GLAVMG, NRT, and VKA. Residues asparagine 107 and 133–135 contribute to the substrate site; that span reads SGG. Lysine 188 (proton acceptor) is an active-site residue. 191–192 lines the substrate pocket; it reads HN. Glutamate 195 serves as the catalytic Proton donor. Substrate is bound by residues tyrosine 196, lysine 266, arginine 293, arginine 456, and histidine 462. Positions 484–486 match the Microbody targeting signal motif; it reads SKI.

This sequence belongs to the 6-phosphogluconate dehydrogenase family. As to quaternary structure, forms homodimer. Forms heterodimers with PGD1 or PGD3.

The protein resides in the cytoplasm. The protein localises to the cytosol. It is found in the peroxisome. The enzyme catalyses 6-phospho-D-gluconate + NADP(+) = D-ribulose 5-phosphate + CO2 + NADPH. Its pathway is carbohydrate degradation; pentose phosphate pathway; D-ribulose 5-phosphate from D-glucose 6-phosphate (oxidative stage): step 3/3. Catalyzes the oxidative decarboxylation of 6-phosphogluconate to ribulose 5-phosphate and CO(2), with concomitant reduction of NADP to NADPH. Required for guided growth of the male gametophytes and interaction between the pollen tube and the ovule. This Arabidopsis thaliana (Mouse-ear cress) protein is 6-phosphogluconate dehydrogenase, decarboxylating 2.